We begin with the raw amino-acid sequence, 165 residues long: Cyclic pyranopterin monophosphate synthase (165 aa).

Residues 79–81 and 117–118 contribute to the substrate site; these read LCH and ME. D132 is an active-site residue.

This sequence belongs to the MoaC family. In terms of assembly, homohexamer; trimer of dimers.

It catalyses the reaction (8S)-3',8-cyclo-7,8-dihydroguanosine 5'-triphosphate = cyclic pyranopterin phosphate + diphosphate. The protein operates within cofactor biosynthesis; molybdopterin biosynthesis. Catalyzes the conversion of (8S)-3',8-cyclo-7,8-dihydroguanosine 5'-triphosphate to cyclic pyranopterin monophosphate (cPMP). The polypeptide is Cyclic pyranopterin monophosphate synthase (Chloroflexus aggregans (strain MD-66 / DSM 9485)).